The primary structure comprises 445 residues: Trigger factor (445 aa).

The PPIase FKBP-type domain occupies 163–248; it reads GDTVVIDYVG…IHEVKVKELP (86 aa). The tract at residues 425–445 is disordered; that stretch reads KEVESAKDDADKEASDAKADK.

It belongs to the FKBP-type PPIase family. Tig subfamily.

The protein localises to the cytoplasm. It carries out the reaction [protein]-peptidylproline (omega=180) = [protein]-peptidylproline (omega=0). In terms of biological role, involved in protein export. Acts as a chaperone by maintaining the newly synthesized protein in an open conformation. Functions as a peptidyl-prolyl cis-trans isomerase. The chain is Trigger factor from Lacticaseibacillus casei (strain BL23) (Lactobacillus casei).